We begin with the raw amino-acid sequence, 261 residues long: uncharacterized protein (261 aa).

The N-terminal stretch at 1-22 (MRYLKKVTIYISLLILTIFIGG) is a signal peptide. A lipid anchor (N-palmitoyl cysteine) is attached at Cys23. Cys23 carries S-diacylglycerol cysteine lipidation.

It belongs to the staphylococcal tandem lipoprotein family.

The protein localises to the cell membrane. This is an uncharacterized protein from Staphylococcus epidermidis (strain ATCC 35984 / DSM 28319 / BCRC 17069 / CCUG 31568 / BM 3577 / RP62A).